Consider the following 1609-residue polypeptide: Probable outer membrane protein pmp21 (1609 aa).

The first 30 residues, 1–30, serve as a signal peptide directing secretion; that stretch reads MVAKKTVRSYRSSFSHSVIVAILSAGIAFE. Residues 132–145 show a composition bias toward polar residues; sequence FSQPTQEPDTSNAV. 2 disordered regions span residues 132-183 and 640-677; these read FSQP…KSPE and TAPV…EVPP. Composition is skewed to basic and acidic residues over residues 149–175 and 651–672; these read ISSD…KEVS and NKDE…KTVE. One can recognise an Autotransporter domain in the interval 1328-1609; that stretch reads ELDFSTNVWG…DFNGGIRIIF (282 aa).

It belongs to the PMP outer membrane protein family.

Its subcellular location is the secreted. It is found in the cell wall. The protein localises to the cell outer membrane. In Chlamydia pneumoniae (Chlamydophila pneumoniae), this protein is Probable outer membrane protein pmp21 (pmp21).